The following is a 426-amino-acid chain: Glutamate-1-semialdehyde 2,1-aminomutase (426 aa).

Lysine 267 carries the post-translational modification N6-(pyridoxal phosphate)lysine.

This sequence belongs to the class-III pyridoxal-phosphate-dependent aminotransferase family. HemL subfamily. In terms of assembly, homodimer. Requires pyridoxal 5'-phosphate as cofactor.

It localises to the cytoplasm. The enzyme catalyses (S)-4-amino-5-oxopentanoate = 5-aminolevulinate. Its pathway is porphyrin-containing compound metabolism; protoporphyrin-IX biosynthesis; 5-aminolevulinate from L-glutamyl-tRNA(Glu): step 2/2. This chain is Glutamate-1-semialdehyde 2,1-aminomutase, found in Bdellovibrio bacteriovorus (strain ATCC 15356 / DSM 50701 / NCIMB 9529 / HD100).